The chain runs to 125 residues: uncharacterized protein (125 aa).

The protein localises to the mitochondrion. This is an uncharacterized protein from Paramecium tetraurelia.